The following is a 332-amino-acid chain: Probable endo-beta-1,4-glucanase B (332 aa).

Positions 1 to 18 (MKFQSTLLLAAAAGSALA) are cleaved as a signal peptide. 2 N-linked (GlcNAc...) asparagine glycosylation sites follow: asparagine 38 and asparagine 100. Glutamate 160 functions as the Proton donor in the catalytic mechanism. Asparagine 212 is a glycosylation site (N-linked (GlcNAc...) asparagine). Glutamate 267 (nucleophile) is an active-site residue. An N-linked (GlcNAc...) asparagine glycan is attached at asparagine 289.

It belongs to the glycosyl hydrolase 5 (cellulase A) family.

The protein localises to the secreted. The enzyme catalyses Endohydrolysis of (1-&gt;4)-beta-D-glucosidic linkages in cellulose, lichenin and cereal beta-D-glucans.. Functionally, has endoglucanase activity on substrates containing beta-1,4 glycosidic bonds, like in carboxymethylcellulose (CMC), hydroxyethylcellulose (HEC) and beta-glucan. Involved in the degradation of complex natural cellulosic substrates. This chain is Probable endo-beta-1,4-glucanase B (eglB), found in Aspergillus kawachii (strain NBRC 4308) (White koji mold).